Consider the following 291-residue polypeptide: Homeobox protein knotted-1-like 7 (291 aa).

The ELK domain occupies 194 to 214; it reads ELKLELKQGFKSRIEDVREEI. The homeobox; TALE-type DNA-binding region spans 215-278; that stretch reads MRKRRAGKLP…NQRKRNWHNN (64 aa).

The protein belongs to the TALE/KNOX homeobox family. In terms of assembly, may form heterodimeric complex with the TALE/BELL proteins. Interacts with OFP1, OFP2, OFP3, OFP4 and OFP6.

Its subcellular location is the nucleus. May be involved in secondary cell wall biosynthesis. This is Homeobox protein knotted-1-like 7 (KNAT7) from Arabidopsis thaliana (Mouse-ear cress).